Here is a 90-residue protein sequence, read N- to C-terminus: Small ribosomal subunit protein uS15c (90 aa).

Belongs to the universal ribosomal protein uS15 family. As to quaternary structure, part of the 30S ribosomal subunit.

It is found in the plastid. The protein resides in the chloroplast. The protein is Small ribosomal subunit protein uS15c (rps15-A) of Pelargonium hortorum (Common geranium).